We begin with the raw amino-acid sequence, 105 residues long: Co-chaperonin GroES (105 aa).

The protein belongs to the GroES chaperonin family. As to quaternary structure, heptamer of 7 subunits arranged in a ring. Interacts with the chaperonin GroEL.

It localises to the cytoplasm. Its function is as follows. Together with the chaperonin GroEL, plays an essential role in assisting protein folding. The GroEL-GroES system forms a nano-cage that allows encapsulation of the non-native substrate proteins and provides a physical environment optimized to promote and accelerate protein folding. GroES binds to the apical surface of the GroEL ring, thereby capping the opening of the GroEL channel. This chain is Co-chaperonin GroES, found in Parvibaculum lavamentivorans (strain DS-1 / DSM 13023 / NCIMB 13966).